The primary structure comprises 193 residues: Imidazoleglycerol-phosphate dehydratase (193 aa).

The protein belongs to the imidazoleglycerol-phosphate dehydratase family.

The protein resides in the cytoplasm. It catalyses the reaction D-erythro-1-(imidazol-4-yl)glycerol 3-phosphate = 3-(imidazol-4-yl)-2-oxopropyl phosphate + H2O. It functions in the pathway amino-acid biosynthesis; L-histidine biosynthesis; L-histidine from 5-phospho-alpha-D-ribose 1-diphosphate: step 6/9. The sequence is that of Imidazoleglycerol-phosphate dehydratase from Sulfolobus acidocaldarius (strain ATCC 33909 / DSM 639 / JCM 8929 / NBRC 15157 / NCIMB 11770).